The following is a 636-amino-acid chain: tRNA uridine 5-carboxymethylaminomethyl modification enzyme MnmG (636 aa).

18–23 (GAGHAG) is a binding site for FAD. 281 to 295 (GPRYCPSIEDKIVRF) lines the NAD(+) pocket.

Belongs to the MnmG family. In terms of assembly, homodimer. Heterotetramer of two MnmE and two MnmG subunits. FAD is required as a cofactor.

It localises to the cytoplasm. Its function is as follows. NAD-binding protein involved in the addition of a carboxymethylaminomethyl (cmnm) group at the wobble position (U34) of certain tRNAs, forming tRNA-cmnm(5)s(2)U34. This chain is tRNA uridine 5-carboxymethylaminomethyl modification enzyme MnmG, found in Lactiplantibacillus plantarum (strain ATCC BAA-793 / NCIMB 8826 / WCFS1) (Lactobacillus plantarum).